A 485-amino-acid polypeptide reads, in one-letter code: REST corepressor 1 (485 aa).

Disordered stretches follow at residues 1-26 (MPAM…ASAS) and 49-110 (AAAS…VGPQ). Composition is skewed to low complexity over residues 49-64 (AAAS…AAAA) and 74-95 (AAAA…SGSS). The segment at 78 to 257 (PNGNSSSNSW…RHARKQKRER (180 aa)) is interaction with HDAC1. An ELM2 domain is found at 103-189 (GGMRVGPQYQ…KSLADLPNFT (87 aa)). Lys-122 participates in a covalent cross-link: Glycyl lysine isopeptide (Lys-Gly) (interchain with G-Cter in SUMO2). Ser-127 is modified (phosphoserine). In terms of domain architecture, SANT 1 spans 190 to 241 (PFPDEWTVEDKVLFEQAFSFHGKTFHRIQQMLPDKSIASLVKFYYSWKKTRT). The stretch at 244–273 (SVMDRHARKQKREREESEDELEEANGNNPI) forms a coiled coil. The interval 244 to 314 (SVMDRHARKQ…AKNRAKRKPP (71 aa)) is disordered. Ser-260 is modified (phosphoserine). Residues 278–288 (DQNKESKKEVP) show a composition bias toward basic and acidic residues. Positions 296–384 (VKKEKHSTQA…LPEVIQKCNA (89 aa)) are interaction with KDM1A. Lys-297 participates in a covalent cross-link: Glycyl lysine isopeptide (Lys-Gly) (interchain with G-Cter in SUMO2). Residues 334–369 (ATTVLRQLDMELVSVKRQIQNIKQTNSALKEKLDGG) adopt a coiled-coil conformation. In terms of domain architecture, SANT 2 spans 381–432 (KCNARWTTEEQLLAVQAIRKYGRDFQAISDVIGNKSVVQVKNFFVNYRRRFN). Positions 442–485 (AEHGKEETNGPSNQKPVKSPDNSIKMPEEEDEAPVLDVRYASAS) are disordered. Polar residues predominate over residues 450–463 (NGPSNQKPVKSPDN). The residue at position 460 (Ser-460) is a Phosphoserine. Lys-466 is covalently cross-linked (Glycyl lysine isopeptide (Lys-Gly) (interchain with G-Cter in SUMO2)).

It belongs to the CoREST family. Interacts directly with GFI1 and GFI1B in a RCOR/GFI/KDM1A/HDAC complex. Interacts with INMS1. Component of a BHC histone deacetylase complex that contains HDAC1, HDAC2, HMG20B/BRAF35, KDM1A, RCOR1/CoREST and PHF21A/BHC80. The BHC complex may also contain ZMYM2, ZNF217, ZMYM3, GSE1 and GTF2I. Interacts with REST. Interacts with the SMARCE1/BAF57, suggesting that the BHC complex may recruit the ATP-dependent chromatin-remodeling SWI-SNF complex. Interacts with SOX2. As to quaternary structure, (Microbial infection) Interacts with herpes virus HSV-1 ICP0 protein; the interaction leads to the disruption of the BHC complex, thereby preventing the BHC complex from repressing transcription of viral genes. Phosphorylated by HSV-1 protein kinases in case of infection. Ubiquitously expressed.

It is found in the nucleus. Functionally, essential component of the BHC complex, a corepressor complex that represses transcription of neuron-specific genes in non-neuronal cells. The BHC complex is recruited at RE1/NRSE sites by REST and acts by deacetylating and demethylating specific sites on histones, thereby acting as a chromatin modifier. In the BHC complex, it serves as a molecular beacon for the recruitment of molecular machinery, including MeCP2 and SUV39H1, that imposes silencing across a chromosomal interval. Plays a central role in demethylation of Lys-4 of histone H3 by promoting demethylase activity of KDM1A on core histones and nucleosomal substrates. It also protects KDM1A from the proteasome. Component of a RCOR/GFI/KDM1A/HDAC complex that suppresses, via histone deacetylase (HDAC) recruitment, a number of genes implicated in multilineage blood cell development and controls hematopoietic differentiation. This chain is REST corepressor 1 (RCOR1), found in Homo sapiens (Human).